We begin with the raw amino-acid sequence, 22 residues long: Defensin D1 (22 aa).

It belongs to the DEFL family. Group II subfamily.

In terms of biological role, antimicrobial peptide. Active against Gram-positive and Gram-negative bacterial pathogens. This Spinacia oleracea (Spinach) protein is Defensin D1.